Consider the following 623-residue polypeptide: Vacuolar-sorting receptor 1 (623 aa).

The first 22 residues, 1 to 22 (MKCWRLSAILFLGFMLTSLSTA), serve as a signal peptide directing secretion. Topologically, residues 23–564 (RFVVEKNSLS…SKTASQAKST (542 aa)) are lumenal. One can recognise a PA domain in the interval 54–163 (QYGGSMAGNV…SFGEKLKDAI (110 aa)). Asparagine 143 is a glycosylation site (N-linked (GlcNAc...) asparagine). EGF-like domains follow at residues 411–461 (ETNE…TTCE) and 464–511 (GHGR…KNCE). Cystine bridges form between cysteine 415-cysteine 433, cysteine 422-cysteine 442, cysteine 444-cysteine 460, cysteine 468-cysteine 488, cysteine 475-cysteine 496, and cysteine 498-cysteine 510. The region spanning 512-554 (DIDECKDKKACQCPECSCKNTWGSYNCSCSGDLLYIKDQDTCI) is the EGF-like 3; calcium-binding domain. N-linked (GlcNAc...) asparagine glycosylation is present at asparagine 537. Cysteine 540 and cysteine 553 form a disulfide bridge. The helical transmembrane segment at 565–585 (WAAFWVVLIALAMIAGGGFLV) threads the bilayer. The Cytoplasmic segment spans residues 586-623 (YKYRIRQYMDSEIRAIMAQYMPLDSQEEGPNHVNHQRG). A Tyrosine-based internalization motif motif is present at residues 605–608 (YMPL).

This sequence belongs to the VSR (BP-80) family. Interacts with the N-terminal propeptide of aleurein (proaleurein).

It is found in the membrane. The protein localises to the golgi apparatus membrane. Its subcellular location is the cytoplasmic vesicle. It localises to the clathrin-coated vesicle membrane. The protein resides in the prevacuolar compartment membrane. In terms of biological role, vacuolar-sorting receptor (VSR) involved in clathrin-coated vesicles sorting from Golgi apparatus to vacuoles. Seems to binds preferentially proteins containing a N-terminal NPIR motif. The sequence is that of Vacuolar-sorting receptor 1 (BP80) from Pisum sativum (Garden pea).